The chain runs to 207 residues: Suppressor of IKBKE 1 (207 aa).

2 coiled-coil regions span residues 70–102 and 164–192; these read HILLSQENTQIRDLQQENRELWVSLEEHQDALE and CKVQERLAQLELENKELRELLSISSESLQ.

This sequence belongs to the SIKE family. Interacts with IKBKE and TBK1 via its coiled coil region. Interaction with TBK1 is disrupted upon viral infection or TLR3 stimulation. Interacts with CDC42BPB. Interacts with SIKE1 which mediates association with the STRIPAK core complex composed of PP2A catalytic and scaffolding subunits, the striatins (PP2A regulatory subunits), the striatin-associated proteins MOB4, STRIP1 and STRIP2, PDCD10 and members of the STE20 kinases, such as STK24 and STK26.

The protein localises to the cytoplasm. In terms of biological role, physiological suppressor of IKK-epsilon and TBK1 that plays an inhibitory role in virus- and TLR3-triggered IRF3. Inhibits TLR3-mediated activation of interferon-stimulated response elements (ISRE) and the IFN-beta promoter. May act by disrupting the interactions of IKBKE or TBK1 with TICAM1/TRIF, IRF3 and RIGI. Does not inhibit NF-kappa-B activation pathways. Associates with the striatin-interacting phosphatase and kinase (STRIPAK) core complex, forming the extended (SIKE1:SLMAP)STRIPAK complex. The (SIKE1:SLMAP)STRIPAK complex dephosphorylates STK3 leading to the inhibition of Hippo signaling and the control of cell growth. The protein is Suppressor of IKBKE 1 (Sike1) of Mus musculus (Mouse).